Here is a 307-residue protein sequence, read N- to C-terminus: UDP-N-acetylenolpyruvoylglucosamine reductase (307 aa).

An FAD-binding PCMH-type domain is found at 34 to 198 (LGGKADVYIT…LEATFALKKA (165 aa)). Residue Arg177 is part of the active site. The active-site Proton donor is Ser227. Glu297 is an active-site residue.

This sequence belongs to the MurB family. The cofactor is FAD.

It is found in the cytoplasm. The enzyme catalyses UDP-N-acetyl-alpha-D-muramate + NADP(+) = UDP-N-acetyl-3-O-(1-carboxyvinyl)-alpha-D-glucosamine + NADPH + H(+). It functions in the pathway cell wall biogenesis; peptidoglycan biosynthesis. Functionally, cell wall formation. The protein is UDP-N-acetylenolpyruvoylglucosamine reductase of Oceanobacillus iheyensis (strain DSM 14371 / CIP 107618 / JCM 11309 / KCTC 3954 / HTE831).